A 662-amino-acid polypeptide reads, in one-letter code: DCC-interacting protein 13-beta (662 aa).

Residues 3–268 (AVDKLLLEEA…ESVYTPDIDV (266 aa)) enclose the BAR domain. In terms of domain architecture, PH spans 277–375 (LIQKTGYLNL…WICAINNISR (99 aa)). One can recognise a PID domain in the interval 486–635 (SLLQQMFIVR…LMLSVPLTND (150 aa)). Residues 643–662 (DQADDTGGSPSDHRGAESEA) are disordered. Residues 653–662 (SDHRGAESEA) are compositionally biased toward basic and acidic residues.

In terms of assembly, homodimer. Homotetramer. Binds RAB5A/Rab5 through an N-terminal domain. This interaction is essential for its recruitment to endosomal membranes as well as its role in cell proliferation. Binds subunits of the NuRD/MeCP1 complex. Interacts with FSHR; interaction is independent of follicle stimulating hormone stimulation. Interacts with APPL1; the interaction is decreased by adiponectin in a time-dependent manner. Forms a complex comprising APPL1, RUVBL2, CTNNB1, HDAC1 and HDAC2; interaction reduces interaction between CTNNB1, HDAC1, HDAC2 and RUVBL2 leading to the decrease of deacetylase activity of this complex; affects the recruitment of repressive complexes to the Wnt target genes. Interacts (via BAR domain) with TBC1D1; interaction is dependent of TBC1D1 phosphorylation at 'Ser-235'; interaction diminishes the phosphorylation of TBC1D1 at 'Thr-596', resulting in inhibition of SLC2A4 translocation and glucose uptake. Interacts with ANXA2; targets APPL2 to endosomes and acting in parallel to RAB5A. Interacts with RAB31 (in GTP-bound form); interaction contributes to or enhances recruitment of APPL2 to the phagosomes; interaction enhances Fc-gamma receptor-mediated phagocytosis through PI3K/Akt signaling in macrophages. Interacts with PIK3R1; forms a complex with PIK3R1 and APPL1. Interacts (via BAR domain) with ADIPOR1; hinders the accessibility of APPL1 to ADIPOR1; negatively regulates adiponectin signaling; ADIPOQ dissociates this interaction and facilitates the recruitment of APPL1 to ADIPOR1. Interacts (via BAR domain) with ADIPOR2; ADIPOQ dissociates this interaction.

The protein resides in the early endosome membrane. It is found in the nucleus. Its subcellular location is the cell membrane. The protein localises to the endosome membrane. It localises to the cytoplasm. The protein resides in the cytoplasmic vesicle. It is found in the phagosome. Its subcellular location is the cell projection. The protein localises to the ruffle. It localises to the ruffle membrane. The protein resides in the phagosome membrane. Multifunctional adapter protein that binds to various membrane receptors, nuclear factors and signaling proteins to regulate many processes, such as cell proliferation, immune response, endosomal trafficking and cell metabolism. Regulates signaling pathway leading to cell proliferation through interaction with RAB5A and subunits of the NuRD/MeCP1 complex. Plays a role in immune response by modulating phagocytosis, inflammatory and innate immune responses. In macrophages, enhances Fc-gamma receptor-mediated phagocytosis through interaction with RAB31 leading to activation of PI3K/Akt signaling. In response to LPS, modulates inflammatory responses by playing a key role on the regulation of TLR4 signaling and in the nuclear translocation of RELA/NF-kappa-B p65 and the secretion of pro- and anti-inflammatory cytokines. Also functions as a negative regulator of innate immune response via inhibition of AKT1 signaling pathway by forming a complex with APPL1 and PIK3R1. Plays a role in endosomal trafficking of TGFBR1 from the endosomes to the nucleus. Plays a role in cell metabolism by regulating adiponecting ans insulin signaling pathways and adaptative thermogenesis. In muscle, negatively regulates adiponectin-simulated glucose uptake and fatty acid oyidation by inhibiting adiponectin signaling pathway through APPL1 sequestration thereby antagonizing APPL1 action. In muscles, negatively regulates insulin-induced plasma membrane recruitment of GLUT4 and glucose uptake through interaction with TBC1D1. Plays a role in cold and diet-induced adaptive thermogenesis by activating ventromedial hypothalamus (VMH) neurons throught AMPK inhibition which enhances sympathetic outflow to subcutaneous white adipose tissue (sWAT), sWAT beiging and cold tolerance. Also plays a role in other signaling pathways namely Wnt/beta-catenin, HGF and glucocorticoid receptor signaling. Positive regulator of beta-catenin/TCF-dependent transcription through direct interaction with RUVBL2/reptin resulting in the relief of RUVBL2-mediated repression of beta-catenin/TCF target genes by modulating the interactions within the beta-catenin-reptin-HDAC complex. May affect adult neurogenesis in hippocampus and olfactory system via regulating the sensitivity of glucocorticoid receptor. Required for fibroblast migration through HGF cell signaling. The sequence is that of DCC-interacting protein 13-beta from Rattus norvegicus (Rat).